A 434-amino-acid chain; its full sequence is Protein arginine N-methyltransferase 2 (434 aa).

Residues 155–198 are disordered; it reads IQGEETTEEERKEEEPSNTSDIIDEQKVEQPKEDLKEDPSSNQE. A compositionally biased stretch (basic and acidic residues) spans 178-193; the sequence is DEQKVEQPKEDLKEDP. Positions 193 to 434 constitute an RMT2 domain; the sequence is PSSNQETYLK…YHPEARFMDV (242 aa). Residues Y200, M230, 258–263, 279–281, 306–307, and D327 contribute to the S-adenosyl-L-methionine site; these read FGMGII, EAH, and WQ.

The protein belongs to the class I-like SAM-binding methyltransferase superfamily. RMT2 methyltransferase family. As to quaternary structure, monomer.

The protein resides in the cytoplasm. It is found in the nucleus. Its function is as follows. S-adenosyl-L-methionine-dependent protein-arginine N-methyltransferase that methylates the delta-nitrogen atom of arginine residues to form N5-methylarginine (type IV) in target proteins. Monomethylates ribosomal protein L12. The protein is Protein arginine N-methyltransferase 2 of Debaryomyces hansenii (strain ATCC 36239 / CBS 767 / BCRC 21394 / JCM 1990 / NBRC 0083 / IGC 2968) (Yeast).